Here is a 535-residue protein sequence, read N- to C-terminus: Interferon lambda receptor 1 (535 aa).

An N-terminal signal peptide occupies residues 1–20 (MWRADRWAPLLLFLLQSALG). Residues 21–227 (RPRLAPPRNV…FLEAPGDKRA (207 aa)) are Extracellular-facing. A Fibronectin type-III domain is found at 26 to 121 (PPRNVTLFSQ…ESRYLEYLFD (96 aa)). N-linked (GlcNAc...) asparagine glycosylation is found at Asn-29, Asn-36, and Asn-52. 3 disulfides stabilise this stretch: Cys-73-Cys-81, Cys-85-Cys-149, and Cys-194-Cys-216. Asn-141 carries N-linked (GlcNAc...) asparagine glycosylation. A helical membrane pass occupies residues 228-248 (VLAMPSLLLLLIAAVAAGVAW). Residues 249 to 535 (KIMKGNPWFQ…GRMLGDYLVR (287 aa)) lie on the Cytoplasmic side of the membrane. Disordered stretches follow at residues 301 to 419 (NRPA…APCG) and 478 to 520 (VNNP…SSVQ). A compositionally biased stretch (acidic residues) spans 321–336 (STEDEDEDTDYDDDGD). Over residues 350-360 (EKPRVMEHSET) the composition is skewed to basic and acidic residues. Over residues 376 to 396 (GSDGSSAWDSSDRSWSSTGDS) the composition is skewed to low complexity. Residues 397–414 (SYKDEVGSSSCLDRKEPD) are compositionally biased toward basic and acidic residues. A compositionally biased stretch (acidic residues) spans 482–503 (EGEEEQEDEEEEEEEEEEEDWE).

The protein belongs to the type II cytokine receptor family. In terms of assembly, heterodimer with IL10RB. In terms of processing, ubiquitinated by FBXO45-containing E3 ligase leading to proteasomal degradation.

It is found in the membrane. Its function is as follows. The IFNLR1/IL10RB dimer is a receptor for the cytokine ligands IFNL2 and IFNL3 and mediates their antiviral activity. The ligand/receptor complex stimulate the activation of the JAK/STAT signaling pathway leading to the expression of IFN-stimulated genes (ISG), which contribute to the antiviral state. Determines the cell type specificity of the lambda interferon action. Shows a more restricted pattern of expression in the epithelial tissues thereby limiting responses to lambda interferons primarily to epithelial cells of the respiratory, gastrointestinal, and reproductive tracts. Seems not to be essential for early virus-activated host defense in vaginal infection, but plays an important role in Toll-like receptor (TLR)-induced antiviral defense. Plays a significant role in the antiviral immune defense in the intestinal epithelium. The chain is Interferon lambda receptor 1 (Ifnlr1) from Mus musculus (Mouse).